Here is a 612-residue protein sequence, read N- to C-terminus: Proline-rich protein 14 (612 aa).

An N-acetylmethionine modification is found at Met1. Composition is skewed to polar residues over residues 1 to 15 (MDLP…QPSL) and 86 to 96 (VCTQSPALPSQ). 4 disordered regions span residues 1 to 48 (MDLP…EKAS), 65 to 96 (VPLT…LPSQ), 119 to 150 (RARQ…QVPQ), and 206 to 256 (PTLT…PALE). A sufficient for heterochromatin association in interphase and chromatin association in anaphase region spans residues 1–135 (MDLPGNSSPF…ALRMRSRAAS (135 aa)). The segment at 85–405 (PVCTQSPALP…MARTPPPPRP (321 aa)) is required for the interaction with GRB2 and sufficient to promote the phosphorylation of AKT and cell proliferation. The interval 136–392 (GPEESPSKKT…QSRPRRHTVG (257 aa)) is required for nuclear lamina association. Positions 243–252 (ADPPESPVPD) are enriched in pro residues. A Phosphoserine modification is found at Ser307. Disordered regions lie at residues 323–405 (QSRA…PPRP), 444–463 (LGST…FSDP), and 553–583 (DSSL…PSQD). Over residues 342 to 359 (WRTQCNSLAPVSKSSLGR) the composition is skewed to polar residues. The span at 366-379 (LGPPDPGSWPPVPS) shows a compositional bias: pro residues. Over residues 448–463 (KGKELRASKDKVFSDP) the composition is skewed to basic and acidic residues. The interval 546-563 (RRAVEFRDSSLPRSRRPS) is required for nuclear localization. Residues 570–583 (ASRTLTPNLAPSQD) show a composition bias toward polar residues.

In terms of assembly, interacts (via proline-rich region) with GRB2 (via SH3 domain 2). Interacts (via N-terminus) with CBX5.

Its subcellular location is the chromosome. It localises to the nucleus. It is found in the nucleus lamina. The protein localises to the nucleoplasm. Its function is as follows. Functions in tethering peripheral heterochromatin to the nuclear lamina during interphase, possibly through the interaction with heterochromatin protein CBX5/HP1 alpha. Might play a role in reattaching heterochromatin to the nuclear lamina at mitotic exit. Promotes myoblast differentiation during skeletal myogenesis, possibly by stimulating transcription factor MyoD activity via binding to CBX5/HP1 alpha. Involved in the positive regulation of the PI3K-Akt-mTOR signaling pathway and in promoting cell proliferation, possibly via binding to GRB2. This chain is Proline-rich protein 14 (Prr14), found in Mus musculus (Mouse).